We begin with the raw amino-acid sequence, 702 residues long: Exodeoxyribonuclease 1 (702 aa).

An N-domain region spans residues 1-96 (MGIQGLLPQL…STESKRRDKR (96 aa)). Aspartate 30, aspartate 78, glutamate 150, aspartate 152, aspartate 171, aspartate 173, and aspartate 227 together coordinate Mg(2+). Positions 114-247 (NAMDYFQKCV…ITAMKLVRRF (134 aa)) are I-domain. Serine 372 is subject to Phosphoserine. Disordered stretches follow at residues 465-571 (SIQD…SQRS) and 660-685 (SFNSSPILHEESKKRDIETTKSSQAR). The span at 474-498 (NSQSLEEPVSESQLSTQIPSSFITT) shows a compositional bias: polar residues. Composition is skewed to acidic residues over residues 500 to 518 (LEDDDNLSEEVSEVVSDIE) and 535 to 550 (NTDDDGDGDTSEDYSE). A compositionally biased stretch (low complexity) spans 558–571 (TSSTTSFPGSSQRS). Residues 667–678 (LHEESKKRDIET) are compositionally biased toward basic and acidic residues.

It belongs to the XPG/RAD2 endonuclease family. EXO1 subfamily. As to quaternary structure, interacts with mismatch repair protein MSH2. It depends on Mg(2+) as a cofactor.

The protein localises to the nucleus. Inactivated by calcium and zinc ions. In terms of biological role, 5'-&gt;3' double-stranded DNA exonuclease involved in mismatch repair and eventually also in mitotic recombination between direct repeats. Also has a minor role in the correction of large DNA mismatches that occur in the heteroduplex DNA during meiotic recombination at the HIS4 locus. The sequence is that of Exodeoxyribonuclease 1 (EXO1) from Saccharomyces cerevisiae (strain ATCC 204508 / S288c) (Baker's yeast).